Reading from the N-terminus, the 200-residue chain is Cysteine dioxygenase type 1 (200 aa).

Fe cation contacts are provided by His86, His88, and His140. A cross-link (3'-(S-cysteinyl)-tyrosine (Cys-Tyr)) is located at residues 93–157 (CFLKMLQGNL…TEPAVSLHLY (65 aa)).

Belongs to the cysteine dioxygenase family. As to quaternary structure, monomer. Fe(2+) is required as a cofactor. Requires Ni(2+) as cofactor. The cofactor is Zn(2+). The thioether cross-link between Cys-93 and Tyr-157 plays a structural role through stabilizing the Fe(2+) ion, and prevents the production of highly damaging free hydroxyl radicals by holding the oxygen radical via hydroxyl hydrogen. As to expression, highly expressed in liver and placenta. Low expression in heart, brain and pancreas. Also detected in hepatoblastoma Hep-G2 cells.

It carries out the reaction L-cysteine + O2 = 3-sulfino-L-alanine + H(+). It functions in the pathway organosulfur biosynthesis; taurine biosynthesis; hypotaurine from L-cysteine: step 1/2. Functionally, catalyzes the oxidation of cysteine to cysteine sulfinic acid with addition of molecular dioxygen. This Homo sapiens (Human) protein is Cysteine dioxygenase type 1 (CDO1).